Here is a 110-residue protein sequence, read N- to C-terminus: uncharacterized protein (110 aa).

This is an uncharacterized protein from Homo sapiens (Human).